The following is a 135-amino-acid chain: MKVLSIDFGTKRVGLAISDPDQIFAFPYKVMERTTRDAMFSELLEIIENEKVGDIVIGLPLSLDGEDTLTTRQVRNFAASLERRVDLPIHLVDERLSSIAAEDELKEAGLWDRKRKKNLDSQAAKIILETWLARA.

This sequence belongs to the YqgF nuclease family.

Its subcellular location is the cytoplasm. In terms of biological role, could be a nuclease involved in processing of the 5'-end of pre-16S rRNA. The chain is Putative pre-16S rRNA nuclease from Maridesulfovibrio salexigens (strain ATCC 14822 / DSM 2638 / NCIMB 8403 / VKM B-1763) (Desulfovibrio salexigens).